We begin with the raw amino-acid sequence, 928 residues long: Receptor-like kinase TMK4 (928 aa).

Residues 1–24 form the signal peptide; that stretch reads MEAPTPLLLLVLLTTITFFTTSVA. Topologically, residues 25–472 are extracellular; the sequence is DDQTAMLALA…GGSSGGGGSK (448 aa). An intrachain disulfide couples Cys-51 to Cys-58. LRR repeat units follow at residues 61–84, 85–107, 108–130, 132–157, 158–180, 181–205, 207–229, 230–251, 252–276, and 278–298; these read GRVTTISLADKSLTGFIAPEISTL, SELKSVSIQRNKLSGTIPSFAKL, SSLQEIYMDENNFVGVETGAFAG, TSLQILSLSDNNNITTWSFPSELVDS, TSLTTIYLDNTNIAGVLPDIFDS, LASLQNLRLSYNNITGVLPPSLGKS, IQNLWINNQDLGMSGTIEVLSSM, TSLSQAWLHKNHFFGPIPDLSK, SENLFDLQLRDNDLTGIVPPTLLTL, and SLKNISLDNNKFQGPLPLFSP. Asn-144 carries N-linked (GlcNAc...) asparagine glycosylation. Residue Asn-193 is glycosylated (N-linked (GlcNAc...) asparagine). N-linked (GlcNAc...) asparagine glycosylation occurs at Asn-281. 2 disulfides stabilise this stretch: Cys-310–Cys-318 and Cys-348–Cys-356. 3 LRR repeats span residues 360–383, 384–407, and 408–435; these read GKNVVTLNLGKHGFTGFISPAIAN, LTSLKSLYLNGNDLTGVIPKELTF, and MTSLQLIDVSNNNLRGEIPKFPATVKFS. Asn-383 carries N-linked (GlcNAc...) asparagine glycosylation. A disordered region spans residues 445-465; it reads TNGGDGSSPGTGGASGGPGGS. A helical membrane pass occupies residues 473–493; that stretch reads VGVIVGVIVAVLVFLAILGFV. At 494–928 the chain is on the cytoplasmic side; sequence VYKFVMKRKY…PNTFDSADGR (435 aa). A Protein kinase domain is found at 578–858; that stretch reads FSEDNILGRG…HAVNVLGPLV (281 aa). ATP contacts are provided by residues 584–592 and Lys-606; that span reads LGRGGFGVV. The Proton acceptor role is filled by Asp-707. Composition is skewed to polar residues over residues 898 to 911 and 918 to 928; these read FHGDFSYSQTQSSI and FPNTFDSADGR. The segment at 898–928 is disordered; sequence FHGDFSYSQTQSSIPPKASGFPNTFDSADGR.

The protein belongs to the protein kinase superfamily. Ser/Thr protein kinase family. As to quaternary structure, interacts with BAK1 (via kinase domain), SERK4 and SERK5. Expressed in roots, leaves, stems, siliques and flowers. Ubiquitous, with a high expression in mature pollen grains and in the pericycle and the xylem vasculature of the primary and lateral roots.

The protein resides in the membrane. The catalysed reaction is L-seryl-[protein] + ATP = O-phospho-L-seryl-[protein] + ADP + H(+). It carries out the reaction L-threonyl-[protein] + ATP = O-phospho-L-threonyl-[protein] + ADP + H(+). Functionally, involved in auxin signal transduction and cell expansion and proliferation regulation. May be involved in brassinosteroid-mediated plant growth and development via auxin regulation. May be involved in microspore and pollen development. The chain is Receptor-like kinase TMK4 from Arabidopsis thaliana (Mouse-ear cress).